Consider the following 339-residue polypeptide: UDP-N-acetylenolpyruvoylglucosamine reductase (339 aa).

The FAD-binding PCMH-type domain maps to 19-189 (VDVQARLFAE…LRVRFKLSRV (171 aa)). Arg166 is an active-site residue. Ser239 serves as the catalytic Proton donor. Glu335 is an active-site residue.

It belongs to the MurB family. The cofactor is FAD.

It is found in the cytoplasm. It carries out the reaction UDP-N-acetyl-alpha-D-muramate + NADP(+) = UDP-N-acetyl-3-O-(1-carboxyvinyl)-alpha-D-glucosamine + NADPH + H(+). Its pathway is cell wall biogenesis; peptidoglycan biosynthesis. Its function is as follows. Cell wall formation. The chain is UDP-N-acetylenolpyruvoylglucosamine reductase from Pseudomonas syringae pv. syringae (strain B728a).